The chain runs to 213 residues: MOB kinase activator-like 1 homolog A (213 aa).

Residues C77, C82, H159, and H164 each contribute to the Zn(2+) site.

This sequence belongs to the MOB1/phocein family.

The sequence is that of MOB kinase activator-like 1 homolog A (mobA) from Dictyostelium discoideum (Social amoeba).